Here is a 148-residue protein sequence, read N- to C-terminus: Protein F15 (148 aa).

Belongs to the poxviridae F15 protein family.

The sequence is that of Protein F15 from Fowlpox virus (strain NVSL) (FPV).